Consider the following 610-residue polypeptide: Phosphomethylpyrimidine synthase (610 aa).

Substrate contacts are provided by residues N216, M245, Y274, H310, S330–G332, D371–R374, and E410. Zn(2+) is bound at residue H414. Y437 serves as a coordination point for substrate. H478 contributes to the Zn(2+) binding site. Residues C558, C561, and C566 each coordinate [4Fe-4S] cluster.

The protein belongs to the ThiC family. Homodimer. Requires [4Fe-4S] cluster as cofactor.

The enzyme catalyses 5-amino-1-(5-phospho-beta-D-ribosyl)imidazole + S-adenosyl-L-methionine = 4-amino-2-methyl-5-(phosphooxymethyl)pyrimidine + CO + 5'-deoxyadenosine + formate + L-methionine + 3 H(+). Its pathway is cofactor biosynthesis; thiamine diphosphate biosynthesis. In terms of biological role, catalyzes the synthesis of the hydroxymethylpyrimidine phosphate (HMP-P) moiety of thiamine from aminoimidazole ribotide (AIR) in a radical S-adenosyl-L-methionine (SAM)-dependent reaction. This is Phosphomethylpyrimidine synthase from Rhizobium etli (strain ATCC 51251 / DSM 11541 / JCM 21823 / NBRC 15573 / CFN 42).